Consider the following 634-residue polypeptide: Threonine--tRNA ligase (634 aa).

Positions 1–61 (MFEVKLKDGS…DSDCEVQFVK (61 aa)) constitute a TGS domain. The interval 242–532 (DHRKIGKEMG…LIEHYAGKFP (291 aa)) is catalytic. Zn(2+) contacts are provided by Cys333, His384, and His509.

The protein belongs to the class-II aminoacyl-tRNA synthetase family. Homodimer. Requires Zn(2+) as cofactor.

It localises to the cytoplasm. The enzyme catalyses tRNA(Thr) + L-threonine + ATP = L-threonyl-tRNA(Thr) + AMP + diphosphate + H(+). Functionally, catalyzes the attachment of threonine to tRNA(Thr) in a two-step reaction: L-threonine is first activated by ATP to form Thr-AMP and then transferred to the acceptor end of tRNA(Thr). Also edits incorrectly charged L-seryl-tRNA(Thr). This chain is Threonine--tRNA ligase, found in Finegoldia magna (strain ATCC 29328 / DSM 20472 / WAL 2508) (Peptostreptococcus magnus).